Consider the following 155-residue polypeptide: Protein FAM201A (155 aa).

The interval 130 to 155 (QDQGCGQHRPHSPRLVDIALPGGGWT) is disordered.

This chain is Protein FAM201A (FAM201A), found in Homo sapiens (Human).